Consider the following 251-residue polypeptide: uncharacterized protein (251 aa).

The segment at threonine 229 to threonine 251 is disordered. Positions serine 234–asparagine 245 are enriched in basic and acidic residues.

This is an uncharacterized protein from Acanthamoeba polyphaga (Amoeba).